The following is a 1060-amino-acid chain: Desmoglein-1-beta (1060 aa).

The first 23 residues, 1–23, serve as a signal peptide directing secretion; sequence MDWHSFRIAALLLTSLVVLEVNS. The propeptide occupies 24-49; the sequence is EFQIQVRDHNAKNGTIKWHSIRRQKR. 4 Cadherin domains span residues 50 to 157, 158 to 269, 270 to 389, and 386 to 493; these read EWIK…PPVF, SMTT…IPYL, EQSS…RPGS, and RPGS…PGSD. Over 50-567 the chain is Extracellular; sequence EWIKFAAACR…ITEDNVHFGP (518 aa). N-linked (GlcNAc...) (high mannose) asparagine glycosylation occurs at N110. N180 is a glycosylation site (N-linked (GlcNAc...) asparagine). The segment at 490–560 is disordered; it reads PGSDGGGSSS…PEPEPFDITE (71 aa). Positions 492-503 are enriched in gly residues; that stretch reads SDGGGSSSGSGG. A compositionally biased stretch (polar residues) spans 510–519; the sequence is NGYQGTSTVG. A compositionally biased stretch (gly residues) spans 525 to 537; the sequence is GSGGVTSSGGGSG. Residues 549–560 are compositionally biased toward acidic residues; sequence DEPEPEPFDITE. Residues 568–588 traverse the membrane as a helical segment; the sequence is AGIGLLIMGFLVLGLVPFLLI. Over 589–1060 the chain is Cytoplasmic; sequence CCDCGGAPGG…TKYSTVQYSK (472 aa). Low complexity predominate over residues 792–801; the sequence is PDPDSSWPPQ. The tract at residues 792–811 is disordered; sequence PDPDSSWPPQSTEPMCPQST. Desmoglein repeat repeat units lie at residues 835–861, 862–891, 892–921, 922–949, and 950–978; these read AYPS…TVRE, SYAT…ERVV, GPVP…ERVI, APGS…ERVI, and QPTS…ERVV.

Interacts with DSC3; there is evidence to suggest that the interaction promotes cell-cell adhesion of keratinocytes. As to expression, expressed in epidermis.

The protein resides in the cell membrane. The protein localises to the cell junction. Its subcellular location is the desmosome. It localises to the cytoplasm. It is found in the nucleus. Functionally, component of intercellular desmosome junctions. Involved in the interaction of plaque proteins and intermediate filaments mediating cell-cell adhesion. This chain is Desmoglein-1-beta (Dsg1b), found in Mus musculus (Mouse).